The primary structure comprises 132 residues: Small ribosomal subunit protein uS8 (132 aa).

Belongs to the universal ribosomal protein uS8 family. As to quaternary structure, part of the 30S ribosomal subunit. Contacts proteins S5 and S12.

Functionally, one of the primary rRNA binding proteins, it binds directly to 16S rRNA central domain where it helps coordinate assembly of the platform of the 30S subunit. This is Small ribosomal subunit protein uS8 from Rickettsia typhi (strain ATCC VR-144 / Wilmington).